A 529-amino-acid chain; its full sequence is Calcium-dependent protein kinase 3 (529 aa).

The tract at residues 1–73 is disordered; the sequence is MGHRHSKSKS…GRILGRPMEE (73 aa). Gly2 carries N-myristoyl glycine lipidation. The span at 39–53 shows a compositional bias: gly residues; it reads SGSGTVGSSGSGTGG. Residues 78 to 336 enclose the Protein kinase domain; that stretch reads YEFGRELGRG…AAEVLNHPWI (259 aa). ATP is bound by residues 84–92 and Lys107; that span reads LGRGQFGVT. The active-site Proton acceptor is Asp202. Ser242 carries the post-translational modification Phosphoserine. Positions 342 to 372 are autoinhibitory domain; the sequence is ASDKPLDNAVLSRMKQFRAMNKLKKMALKVI. EF-hand domains follow at residues 379 to 414, 415 to 450, 451 to 485, and 486 to 521; these read EEII…LGSK, ISEA…MNRI, ERED…KYNM, and GDDK…GNPE. Residues Asp392, Asp394, Asn396, Glu403, Asp428, Asp430, Asp432, Ser434, Glu439, Asp464, Asp466, Ser468, Tyr470, Glu475, Asp499, Asp501, Asp503, Lys505, and Glu510 each contribute to the Ca(2+) site.

This sequence belongs to the protein kinase superfamily. Ser/Thr protein kinase family. CDPK subfamily. As to quaternary structure, interacts with GHR1. Expressed in both guard cells and mesophyll cells.

It is found in the cytoplasm. The protein localises to the nucleus. It carries out the reaction L-seryl-[protein] + ATP = O-phospho-L-seryl-[protein] + ADP + H(+). It catalyses the reaction L-threonyl-[protein] + ATP = O-phospho-L-threonyl-[protein] + ADP + H(+). With respect to regulation, activated by calcium. Autophosphorylation may play an important role in the regulation of the kinase activity. Functionally, may play a role in signal transduction pathways that involve calcium as a second messenger. Functions in abscisic acid (ABA) regulation of guard cell S-type anion- and Ca(2+)-permeable channels and stomatal closure. This chain is Calcium-dependent protein kinase 3, found in Arabidopsis thaliana (Mouse-ear cress).